Here is a 517-residue protein sequence, read N- to C-terminus: Bifunctional purine biosynthesis protein PurH (517 aa).

The 145-residue stretch at 1–145 folds into the MGS-like domain; it reads MSPLALVSVS…KNHKDVSVLV (145 aa).

This sequence belongs to the PurH family.

The catalysed reaction is (6R)-10-formyltetrahydrofolate + 5-amino-1-(5-phospho-beta-D-ribosyl)imidazole-4-carboxamide = 5-formamido-1-(5-phospho-D-ribosyl)imidazole-4-carboxamide + (6S)-5,6,7,8-tetrahydrofolate. The enzyme catalyses IMP + H2O = 5-formamido-1-(5-phospho-D-ribosyl)imidazole-4-carboxamide. Its pathway is purine metabolism; IMP biosynthesis via de novo pathway; 5-formamido-1-(5-phospho-D-ribosyl)imidazole-4-carboxamide from 5-amino-1-(5-phospho-D-ribosyl)imidazole-4-carboxamide (10-formyl THF route): step 1/1. The protein operates within purine metabolism; IMP biosynthesis via de novo pathway; IMP from 5-formamido-1-(5-phospho-D-ribosyl)imidazole-4-carboxamide: step 1/1. This chain is Bifunctional purine biosynthesis protein PurH, found in Prochlorococcus marinus subsp. pastoris (strain CCMP1986 / NIES-2087 / MED4).